We begin with the raw amino-acid sequence, 199 residues long: Recombination protein RecR (199 aa).

Residues 57–72 (CQSCRTFTEQSLCPIC) form a C4-type zinc finger. Residues 81–176 (GVICVVETPA…IISRIAHGVP (96 aa)) enclose the Toprim domain.

The protein belongs to the RecR family.

Functionally, may play a role in DNA repair. It seems to be involved in an RecBC-independent recombinational process of DNA repair. It may act with RecF and RecO. The protein is Recombination protein RecR of Shewanella denitrificans (strain OS217 / ATCC BAA-1090 / DSM 15013).